Here is a 761-residue protein sequence, read N- to C-terminus: Zinc finger protein 711 (761 aa).

Glycyl lysine isopeptide (Lys-Gly) (interchain with G-Cter in SUMO2) cross-links involve residues K224, K235, and K296. 5 C2H2-type zinc fingers span residues 383–408 (YPCH…HPDH), 414–436 (YQCT…LESH), 476–499 (HKCK…LAVH), 505–527 (HVCV…MRTH), and 533–556 (YQCQ…KSKH). Residues 515-761 (RHPSELKKHM…IMRHHKEALM (247 aa)) form a required for transcriptional activation region. Residues 562–584 (YKCEHCPQAFGDERELQRHLDLF) form a C2H2-type 6; atypical zinc finger. Positions 564, 567, and 580 each coordinate Zn(2+). 6 consecutive C2H2-type zinc fingers follow at residues 590-613 (HQCP…ISVH), 619-641 (HKCE…SDIH), 647-670 (HQCR…LSVH), 676-698 (LKCK…MKTH), 704-727 (YQCE…ISIH), and 733-755 (HRCE…IMRH).

This sequence belongs to the krueppel C2H2-type zinc-finger protein family. As to quaternary structure, interacts with PHF8. As to expression, expressed in neural tissues.

It localises to the nucleus. Transcription regulator required for brain development. Probably acts as a transcription factor that binds to the promoter of target genes and recruits PHF8 histone demethylase, leading to activated expression of genes involved in neuron development, such as KDM5C. May compete with transcription factor ARX for activation of expression of KDM5C. In Homo sapiens (Human), this protein is Zinc finger protein 711 (ZNF711).